The chain runs to 232 residues: MRIGVITFPGSLDDRDALRAIRLAGAEPVALWHGDHDLQGVDALVLPGGFSYGDYLRCGAIASLSPIMSEVVEAAGKGMPVLGICNGFQMLAEAILVPGGLIRNDHGNFICHAQRLTVENAETPWTGGFERGQKIVIPLKNGEGSFIASAEELKRLEGEGMVVFRYRGVNPNGSLNDIAGVRNERGNVVGLMPHPEHAVEPGFGPDTDQAMRSGTDGLAFFTSVVRSTLVEA.

The 231-residue stretch at 2-232 (RIGVITFPGS…SVVRSTLVEA (231 aa)) folds into the Glutamine amidotransferase type-1 domain. Cys85 acts as the Nucleophile in catalysis. Active-site residues include His194 and Glu196.

As to quaternary structure, part of the FGAM synthase complex composed of 1 PurL, 1 PurQ and 2 PurS subunits.

Its subcellular location is the cytoplasm. It catalyses the reaction N(2)-formyl-N(1)-(5-phospho-beta-D-ribosyl)glycinamide + L-glutamine + ATP + H2O = 2-formamido-N(1)-(5-O-phospho-beta-D-ribosyl)acetamidine + L-glutamate + ADP + phosphate + H(+). It carries out the reaction L-glutamine + H2O = L-glutamate + NH4(+). Its pathway is purine metabolism; IMP biosynthesis via de novo pathway; 5-amino-1-(5-phospho-D-ribosyl)imidazole from N(2)-formyl-N(1)-(5-phospho-D-ribosyl)glycinamide: step 1/2. Its function is as follows. Part of the phosphoribosylformylglycinamidine synthase complex involved in the purines biosynthetic pathway. Catalyzes the ATP-dependent conversion of formylglycinamide ribonucleotide (FGAR) and glutamine to yield formylglycinamidine ribonucleotide (FGAM) and glutamate. The FGAM synthase complex is composed of three subunits. PurQ produces an ammonia molecule by converting glutamine to glutamate. PurL transfers the ammonia molecule to FGAR to form FGAM in an ATP-dependent manner. PurS interacts with PurQ and PurL and is thought to assist in the transfer of the ammonia molecule from PurQ to PurL. The sequence is that of Phosphoribosylformylglycinamidine synthase subunit PurQ from Leifsonia xyli subsp. xyli (strain CTCB07).